The chain runs to 352 residues: Alanine racemase (352 aa).

Lys34 (proton acceptor; specific for D-alanine) is an active-site residue. Position 34 is an N6-(pyridoxal phosphate)lysine (Lys34). A substrate-binding site is contributed by Arg126. Residue Tyr248 is the Proton acceptor; specific for L-alanine of the active site. Met296 is a binding site for substrate.

It belongs to the alanine racemase family. It depends on pyridoxal 5'-phosphate as a cofactor.

The enzyme catalyses L-alanine = D-alanine. The protein operates within amino-acid biosynthesis; D-alanine biosynthesis; D-alanine from L-alanine: step 1/1. Functionally, catalyzes the interconversion of L-alanine and D-alanine. May also act on other amino acids. In Deinococcus deserti (strain DSM 17065 / CIP 109153 / LMG 22923 / VCD115), this protein is Alanine racemase (alr).